Here is a 177-residue protein sequence, read N- to C-terminus: Alkyl hydroperoxide reductase AhpD (177 aa).

Catalysis depends on C131, which acts as the Proton donor. C131 and C134 are disulfide-bonded. Catalysis depends on C134, which acts as the Cysteine sulfenic acid (-SOH) intermediate.

The protein belongs to the AhpD family. As to quaternary structure, homotrimer.

The catalysed reaction is N(6)-[(R)-dihydrolipoyl]-L-lysyl-[lipoyl-carrier protein] + a hydroperoxide = N(6)-[(R)-lipoyl]-L-lysyl-[lipoyl-carrier protein] + an alcohol + H2O. Functionally, antioxidant protein with alkyl hydroperoxidase activity. Required for the reduction of the AhpC active site cysteine residues and for the regeneration of the AhpC enzyme activity. The chain is Alkyl hydroperoxide reductase AhpD from Streptomyces avermitilis (strain ATCC 31267 / DSM 46492 / JCM 5070 / NBRC 14893 / NCIMB 12804 / NRRL 8165 / MA-4680).